A 348-amino-acid polypeptide reads, in one-letter code: Histidinol-phosphate aminotransferase (348 aa).

K211 bears the N6-(pyridoxal phosphate)lysine mark.

Belongs to the class-II pyridoxal-phosphate-dependent aminotransferase family. Histidinol-phosphate aminotransferase subfamily. As to quaternary structure, homodimer. Pyridoxal 5'-phosphate is required as a cofactor.

It carries out the reaction L-histidinol phosphate + 2-oxoglutarate = 3-(imidazol-4-yl)-2-oxopropyl phosphate + L-glutamate. It participates in amino-acid biosynthesis; L-histidine biosynthesis; L-histidine from 5-phospho-alpha-D-ribose 1-diphosphate: step 7/9. This chain is Histidinol-phosphate aminotransferase, found in Pseudomonas entomophila (strain L48).